The primary structure comprises 352 residues: Peptide chain release factor 1 (352 aa).

N5-methylglutamine is present on Gln-230.

The protein belongs to the prokaryotic/mitochondrial release factor family. In terms of processing, methylated by PrmC. Methylation increases the termination efficiency of RF1.

It is found in the cytoplasm. In terms of biological role, peptide chain release factor 1 directs the termination of translation in response to the peptide chain termination codons UAG and UAA. The chain is Peptide chain release factor 1 from Exiguobacterium sibiricum (strain DSM 17290 / CCUG 55495 / CIP 109462 / JCM 13490 / 255-15).